We begin with the raw amino-acid sequence, 273 residues long: Undecaprenyl-diphosphatase (273 aa).

8 helical membrane-spanning segments follow: residues 18 to 40 (GLTE…LLGF), 45 to 65 (AKTF…VVFW), 92 to 112 (GHIL…HEQI), 114 to 134 (AIFA…LLLA), 151 to 171 (LTYL…WPGF), 189 to 209 (YAAS…ATVL), 225 to 245 (MFAI…KFFL), and 253 to 273 (FVPF…ILIG).

This sequence belongs to the UppP family.

Its subcellular location is the cell inner membrane. The catalysed reaction is di-trans,octa-cis-undecaprenyl diphosphate + H2O = di-trans,octa-cis-undecaprenyl phosphate + phosphate + H(+). Catalyzes the dephosphorylation of undecaprenyl diphosphate (UPP). Confers resistance to bacitracin. The polypeptide is Undecaprenyl-diphosphatase (Sodalis glossinidius (strain morsitans)).